A 409-amino-acid polypeptide reads, in one-letter code: Ubiquitin-associated domain-containing protein 1 (409 aa).

Met-1 carries the N-acetylmethionine modification. Positions 14-98 (LRLHICAADG…LLLIKKRAPS (85 aa)) constitute a Ubiquitin-like domain. The UBA 1 domain maps to 187–231 (DEDERVDETALRQLTEMGFPESRASKALRLNHMSVPQAMEWLIEH). The tract at residues 235–273 (PAIDTPLPGHAAQAEASAAAATSSSSSEAAVGTSVEDEE) is disordered. Residues 245–264 (AAQAEASAAAATSSSSSEAA) are compositionally biased toward low complexity. Residues 292 to 332 (RADARAVISLMEMGFDEKEVIDALRVNNNQQNAACEWLLGD) form the UBA 2 domain. Positions 357-396 (NPVVQLGLTNPKTLLAFEDMLENPLNSTQWMNDPETGPVM) constitute an STI1 domain.

In terms of assembly, component of the KPC complex composed of RNF123/KPC1 and UBAC1/KPC2. Interacts (via ubiquitin-like domain) with RNF123. Interacts (via ubiquitin-like and UBA domains) with the proteasome via its N-terminal domain.

The protein localises to the cytoplasm. It functions in the pathway protein modification; protein ubiquitination. In terms of biological role, non-catalytic component of the KPC complex, a E3 ubiquitin-protein ligase complex that mediates polyubiquitination of target proteins, such as CDKN1B and NFKB1. The KPC complex catalyzes polyubiquitination and proteasome-mediated degradation of CDKN1B during G1 phase of the cell cycle. The KPC complex also acts as a key regulator of the NF-kappa-B signaling by promoting maturation of the NFKB1 component of NF-kappa-B by catalyzing ubiquitination of the NFKB1 p105 precursor. Within the KPC complex, UBAC1 acts as an adapter that promotes the transfer of target proteins that have been polyubiquitinated by RNF123/KPC1 to the 26S proteasome. The protein is Ubiquitin-associated domain-containing protein 1 (Ubac1) of Rattus norvegicus (Rat).